Here is a 795-residue protein sequence, read N- to C-terminus: MLSQVYRCGFQPFNQHLLPWVKCTTVFRSHCIQPSVIRHVRSWSNIPFITVPLSRTHGKSFAHRSELKHAKRIVVKLGSAVVTRGDECGLALGRLASIVEQVSVLQNQGREMMLVTSGAVAFGKQRLRHEILLSQSVRQALHSGQNQLKEMAIPVLEARACAAAGQSGLMALYEAMFTQYSICAAQILVTNLDFHDEQKRRNLNGTLHELLRMNIVPIVNTNDAVVPPAEPNSDLQGVNVISVKDNDSLAARLAVEMKTDLLIVLSDVEGLFDSPPGSDDAKLIDIFYPGDQQSVTFGTKSRVGMGGMEAKVKAALWALQGGTSVVIANGTHPKVSGHVITDIVEGKKVGTFFSEVKPAGPTVEQQGEMARSGGRMLATLEPEQRAEIIHHLADLLTDQRDEILLANKKDLEEAEGRLAAPLLKRLSLSTSKLNSLAIGLRQIAASSQDSVGRVLRRTRIAKNLELEQVTVPIGVLLVIFESRPDCLPQVAALAIASGNGLLLKGGKEAAHSNRILHLLTQEALSIHGVKEAVQLVNTREEVEDLCRLDKMIDLIIPRGSSQLVRDIQKAAKGIPVMGHSEGICHMYVDSEASVDKVTRLVRDSKCEYPAACNALETLLIHRDLLRTPLFDQIIDMLRVEQVKIHAGPKFASYLTFSPSEVKSLRTEYGDLELCIEVVDNVQDAIDHIHKYGSSHTDVIVTEDENTAEFFLQHVDSACVFWNASTRFSDGYRFGLGAEVGISTSRIHARGPVGLEGLLTTKWLLRGKDHVVSDFSEHGSLKYLHENLPIPQRNTN.

The tract at residues 1 to 361 (MLSQVYRCGF…FFSEVKPAGP (361 aa)) is glutamate 5-kinase. 3 residues coordinate substrate: Ser-117, Asp-223, and Asn-246. ATP contacts are provided by residues 266–267 (SD) and 305–311 (MGGMEAK). 3 positions are modified to N6-succinyllysine: Lys-311, Lys-347, and Lys-550. The interval 362–795 (TVEQQGEMAR…NLPIPQRNTN (434 aa)) is gamma-glutamyl phosphate reductase.

The protein in the N-terminal section; belongs to the glutamate 5-kinase family. It in the C-terminal section; belongs to the gamma-glutamyl phosphate reductase family. In terms of assembly, can form homodimers/multimers.

It localises to the mitochondrion. It is found in the mitochondrion matrix. It carries out the reaction L-glutamate + ATP = L-glutamyl 5-phosphate + ADP. It catalyses the reaction L-glutamate 5-semialdehyde + phosphate + NADP(+) = L-glutamyl 5-phosphate + NADPH + H(+). It participates in amino-acid biosynthesis; L-proline biosynthesis; L-glutamate 5-semialdehyde from L-glutamate: step 1/2. It functions in the pathway amino-acid biosynthesis; L-proline biosynthesis; L-glutamate 5-semialdehyde from L-glutamate: step 2/2. Its activity is regulated as follows. Isoform Short: Inhibited by L-ornithine with a Ki of approximately 0.25 mm. Isoform Long: Insensitive to ornithine inhibition. This is due to the two amino acid insert which abolishes feedback inhibition of P5CS activity by L-ornithine. Functionally, bifunctional enzyme that converts glutamate to glutamate 5-semialdehyde, an intermediate in the biosynthesis of proline, ornithine and arginine. This chain is Delta-1-pyrroline-5-carboxylate synthase (ALDH18A1), found in Homo sapiens (Human).